The sequence spans 283 residues: Bifunctional protein FolD (283 aa).

NADP(+)-binding positions include 165 to 167 (GRS), Ser190, and Val231.

It belongs to the tetrahydrofolate dehydrogenase/cyclohydrolase family. As to quaternary structure, homodimer. Interacts with BrxC.

It carries out the reaction (6R)-5,10-methylene-5,6,7,8-tetrahydrofolate + NADP(+) = (6R)-5,10-methenyltetrahydrofolate + NADPH. It catalyses the reaction (6R)-5,10-methenyltetrahydrofolate + H2O = (6R)-10-formyltetrahydrofolate + H(+). Its pathway is one-carbon metabolism; tetrahydrofolate interconversion. In terms of biological role, catalyzes the oxidation of 5,10-methylenetetrahydrofolate to 5,10-methenyltetrahydrofolate and then the hydrolysis of 5,10-methenyltetrahydrofolate to 10-formyltetrahydrofolate. This is Bifunctional protein FolD from Bacillus subtilis (strain 168).